The sequence spans 1107 residues: Dynein axonemal assembly factor 1 homolog (1107 aa).

6 LRR repeats span residues 34–56, 57–78, 79–100, 101–122, 125–146, and 150–171; these read HLNDILYLNYSGYNAIESLEEYV, GLKCLWLECNAISEIKGLEYQT, ELKCLYLQNNLITKIENLDSCK, QLDTLNLSHNHITRIENCGHDI, VLNTLNLSHNYLKTADNLDHLR, and FVSVLDLSHNRIEDIAIVKILG. The LRRCT domain occupies 184 to 223; sequence NPVVNEIPSYRKTLILECKNLTYLDTRPVFDRDRACAEAW. Disordered regions lie at residues 258-281, 428-487, 500-608, 780-810, 834-855, and 1070-1107; these read HRGDGEPELLKTSSDEEDEDKASK, NESP…TLNV, ESKD…LEKE, KEEPKAPETPSIESEEEIPEELEVHSSEHEQ, SSEDLKSNFDDSSESSDSAEED, and AAHAGEVMQDTEDVESKPVEIDGTKEETVDSELADNCD. The segment covering 428–437 has biased composition (polar residues); that stretch reads NESPLTSPSF. Over residues 446–459 the composition is skewed to acidic residues; sequence EEIEPTDVEEEQQI. Residues 500 to 512 show a composition bias toward basic and acidic residues; the sequence is ESKDGELISKVES. Residues 531–544 are compositionally biased toward acidic residues; it reads DNSESEPTDITNED. Residues 549–560 show a composition bias toward low complexity; that stretch reads SSSVSVTSSTDS. The segment covering 581-597 has biased composition (polar residues); it reads NYRQDSTTSTDSENEVS. Basic and acidic residues predominate over residues 801–810; it reads LEVHSSEHEQ. Residues 844 to 855 are compositionally biased toward acidic residues; sequence DSSESSDSAEED. Residues 1083–1097 show a composition bias toward basic and acidic residues; sequence VESKPVEIDGTKEET. Residues 1098–1107 show a composition bias toward acidic residues; the sequence is VDSELADNCD.

Belongs to the DNAAF1 family.

The protein resides in the cell projection. Its subcellular location is the cilium. Functionally, cilium-specific protein required for cilia structures. The chain is Dynein axonemal assembly factor 1 homolog from Aedes aegypti (Yellowfever mosquito).